Consider the following 314-residue polypeptide: 2,3-dihydroxyphenylpropionate/2,3-dihydroxicinnamic acid 1,2-dioxygenase (314 aa).

The active-site Proton donor is His-115. His-179 serves as the catalytic Proton acceptor.

Belongs to the LigB/MhpB extradiol dioxygenase family. Homotetramer. Requires Fe(2+) as cofactor.

The enzyme catalyses 3-(2,3-dihydroxyphenyl)propanoate + O2 = (2Z,4E)-2-hydroxy-6-oxonona-2,4-dienedioate + H(+). It carries out the reaction (2E)-3-(2,3-dihydroxyphenyl)prop-2-enoate + O2 = (2Z,4E,7E)-2-hydroxy-6-oxonona-2,4,7-trienedioate + H(+). It participates in aromatic compound metabolism; 3-phenylpropanoate degradation. Its function is as follows. Catalyzes the non-heme iron(II)-dependent oxidative cleavage of 2,3-dihydroxyphenylpropionic acid and 2,3-dihydroxicinnamic acid into 2-hydroxy-6-ketononadienedioate and 2-hydroxy-6-ketononatrienedioate, respectively. This chain is 2,3-dihydroxyphenylpropionate/2,3-dihydroxicinnamic acid 1,2-dioxygenase, found in Escherichia coli (strain 55989 / EAEC).